Here is a 231-residue protein sequence, read N- to C-terminus: Albumin-2 (231 aa).

4 Hemopexin repeats span residues 4–55, 62–112, 118–166, and 172–223; these read TGYI…FKSL, SYGV…FPFF, ENGI…FPCF, and ESGT…WPSL. 4 residues coordinate Ca(2+): asparagine 8, aspartate 66, aspartate 122, and aspartate 176.

Monomer and homodimer.

It is found in the cytoplasm. It localises to the cytosol. Functionally, may play a role in response to oxidative stress and polyamine biosynthesis. The sequence is that of Albumin-2 from Pisum sativum (Garden pea).